The primary structure comprises 183 residues: Inner membrane protein YgjV (183 aa).

The Periplasmic segment spans residues 1–2 (MT). Residues 3-23 (AYWLAQGVGVIAFLIGITTFF) traverse the membrane as a helical segment. The Cytoplasmic segment spans residues 24–38 (NRDERRFKKQLSVYS). Residues 39 to 59 (AVIGVHFFLLGTYPAGASAIL) traverse the membrane as a helical segment. Topologically, residues 60-71 (NAIRTLITLRTR) are periplasmic. The next 2 membrane-spanning stretches (helical) occupy residues 72-92 (SLWV…AKFH) and 93-113 (HPVE…LFCC). Residues 114–133 (KGLTMRCVMWFSTCCWVIHN) are Periplasmic-facing. A helical transmembrane segment spans residues 134–154 (FWAGSIGGTMIEGSFLLMNGL). The Cytoplasmic portion of the chain corresponds to 155–183 (NIIRFWRMQKRGIDPFKVEKTPSAVDERG).

It localises to the cell inner membrane. This is Inner membrane protein YgjV (ygjV) from Escherichia coli (strain K12).